Here is a 179-residue protein sequence, read N- to C-terminus: Repressor of phase 1 flagellin gene (179 aa).

Functionally, transcriptional repressor of the FliC phase-1 flagellin. This is Repressor of phase 1 flagellin gene (fljA) from Salmonella typhimurium (strain LT2 / SGSC1412 / ATCC 700720).